We begin with the raw amino-acid sequence, 301 residues long: Lysozyme-like protein 3 (301 aa).

Residues 1–15 form the signal peptide; sequence MKLFALLVSITLCYS. In terms of domain architecture, Ch-type lysozyme spans 64 to 282; the sequence is HAYSVDISFH…HLSQIVHFST (219 aa).

It belongs to the glycosyl hydrolase 25 family.

Functionally, plays a role in the stress response to heavy metals such as copper, probably in a kgb-1-dependent manner. This Caenorhabditis elegans protein is Lysozyme-like protein 3.